Here is a 45-residue protein sequence, read N- to C-terminus: Metallothionein-like protein 1A (45 aa).

The protein belongs to the metallothionein superfamily. Type 15 family. As to expression, expressed in phloem and mesophyll cells of leaves, vascular tissues of cotyledons, sepals and petals. Expressed in anthers. Expressed in root endodermis and at lower levels in cortex of mature region of roots.

In terms of biological role, metallothioneins have a high content of cysteine residues that bind various heavy metals. Functions as a metal chelator of copper (Cu) and zinc (Zn). Plays a role in Cu homeostasis in the roots under elevated Cu concentration. Functions cooperatively with the phytochelatin synthase PCS1 to protect plants from Cu and cadmium (Cd) toxicity. Plays a role in Cu homeostasis, specifically in the remobilization of Cu from senescing leaves. The mobilization of Cu from internal sources is important for seed development. Confers tolerance to Cd and plays a role in Cd and Zn homeostasis. In Arabidopsis thaliana (Mouse-ear cress), this protein is Metallothionein-like protein 1A (MT1A).